A 350-amino-acid chain; its full sequence is Histidinol-phosphate aminotransferase 1 (350 aa).

Lys210 is subject to N6-(pyridoxal phosphate)lysine.

This sequence belongs to the class-II pyridoxal-phosphate-dependent aminotransferase family. Histidinol-phosphate aminotransferase subfamily. In terms of assembly, homodimer. Pyridoxal 5'-phosphate serves as cofactor.

It carries out the reaction L-histidinol phosphate + 2-oxoglutarate = 3-(imidazol-4-yl)-2-oxopropyl phosphate + L-glutamate. It functions in the pathway amino-acid biosynthesis; L-histidine biosynthesis; L-histidine from 5-phospho-alpha-D-ribose 1-diphosphate: step 7/9. In Pseudomonas fluorescens (strain ATCC BAA-477 / NRRL B-23932 / Pf-5), this protein is Histidinol-phosphate aminotransferase 1.